Here is a 183-residue protein sequence, read N- to C-terminus: ADP-ribosylation factor 3 (183 aa).

A lipid anchor (N-myristoyl glycine) is attached at G2. GTP-binding positions include 24–31 (GLDKAGKT), 67–71 (DVGGQ), and 126–129 (NKQD).

The protein belongs to the small GTPase superfamily. Arf family. In terms of assembly, interacts with RUD3.

The protein resides in the golgi apparatus. Functionally, GTP-binding protein involved in protein trafficking; may modulate vesicle budding and uncoating within the Golgi apparatus. The polypeptide is ADP-ribosylation factor 3 (ARF3) (Saccharomyces cerevisiae (strain ATCC 204508 / S288c) (Baker's yeast)).